The chain runs to 211 residues: Cytochrome c biogenesis ATP-binding export protein CcmA (211 aa).

The ABC transporter domain occupies 1–211; sequence MAIHNLACVR…RMAEATSCFG (211 aa). ATP is bound at residue 33–40; it reads GSNGAGKT.

It belongs to the ABC transporter superfamily. CcmA exporter (TC 3.A.1.107) family. The complex is composed of two ATP-binding proteins (CcmA) and two transmembrane proteins (CcmB).

It localises to the cell inner membrane. It catalyses the reaction heme b(in) + ATP + H2O = heme b(out) + ADP + phosphate + H(+). Its function is as follows. Part of the ABC transporter complex CcmAB involved in the biogenesis of c-type cytochromes; once thought to export heme, this seems not to be the case, but its exact role is uncertain. Responsible for energy coupling to the transport system. The polypeptide is Cytochrome c biogenesis ATP-binding export protein CcmA (Sodalis glossinidius (strain morsitans)).